We begin with the raw amino-acid sequence, 181 residues long: Peptidyl-tRNA hydrolase (181 aa).

Tyrosine 14 provides a ligand contact to tRNA. The active-site Proton acceptor is histidine 19. Residues phenylalanine 60, asparagine 62, and asparagine 106 each coordinate tRNA.

The protein belongs to the PTH family. Monomer.

The protein resides in the cytoplasm. It carries out the reaction an N-acyl-L-alpha-aminoacyl-tRNA + H2O = an N-acyl-L-amino acid + a tRNA + H(+). Hydrolyzes ribosome-free peptidyl-tRNAs (with 1 or more amino acids incorporated), which drop off the ribosome during protein synthesis, or as a result of ribosome stalling. Its function is as follows. Catalyzes the release of premature peptidyl moieties from peptidyl-tRNA molecules trapped in stalled 50S ribosomal subunits, and thus maintains levels of free tRNAs and 50S ribosomes. The chain is Peptidyl-tRNA hydrolase from Campylobacter curvus (strain 525.92).